We begin with the raw amino-acid sequence, 485 residues long: Metalloprotease AprA (485 aa).

H187 serves as a coordination point for Zn(2+). Residue E188 is part of the active site. Zn(2+) is bound by residues H191 and H197. Residues R268, G270, T272, D300, G302, G303, D305, T342, E344, G349, G351, D353, N358, L360, N362, G366, G367, A368, G369, D371, G375, G376, G377, G378, D380, G384, G385, T386, G387, D389, D398, D405, D415, D461, T463, N465, S467, and D469 each coordinate Ca(2+). Hemolysin-type calcium-binding repeat units follow at residues 347–364 (FGGS…ANVL), 365–382 (KGGA…ADQL), and 383–395 (WGGT…VFGA).

It belongs to the peptidase M10B family. It depends on Ca(2+) as a cofactor. Zn(2+) serves as cofactor.

It is found in the secreted. Its function is as follows. Secreted protease which is important for P.entomophila to counteract the local immune response of Drosophila. Can degrade antimicrobial peptides (AMPs), e.g. Diptericin and Cecropin A. Thus, protects P.entomophila from the Drosophila antimicrobial peptides produced by the gut innate immune response, and promotes bacterial persistence in the Drosophila gut and killing of the host. Is responsible for maturation of pro-Monalysin to the active toxin Monalysin, by cleaving its N-terminus. The polypeptide is Metalloprotease AprA (Pseudomonas entomophila (strain L48)).